A 117-amino-acid chain; its full sequence is Small ribosomal subunit protein bS6 (117 aa).

The tract at residues 96 to 117 is disordered; it reads HDEGPSVQMQKRDEREGRRERR.

The protein belongs to the bacterial ribosomal protein bS6 family.

Binds together with bS18 to 16S ribosomal RNA. This is Small ribosomal subunit protein bS6 from Jannaschia sp. (strain CCS1).